The following is a 370-amino-acid chain: MFREKLKRELQGIKDENLYRKLRNQDDFILNFSTNDYLGLSKNEEVILAYNEGLKDGAGSTGSRLTSGNFKLHEKLEGVISEFKETEKSLVYSSGYAANVGVISALAKKGDLVLSDELNHASIIDGIRLSRADKLIYRHSDVQNLIEILEKNKYYENIIVVTDSVFSMDGDVSPIDKIAKIIDEYNAVLIIDDAHGTGVLGQGKGTLKHFKVKASDNIIQIGTLSKAIGTSGGFVSGIEELIDYLINNSRSFIYSTSLPPAVISASIKSFELVEKERLSKNLEKNIICANKLFKNHGFIKCESITPIYPFVFGEKSIDISKGLINHGIFGVPIRYPTVKKGMERIRISITSKHEKNDFKYLCEKIDKLTI.

R20 lines the substrate pocket. 95–96 serves as a coordination point for pyridoxal 5'-phosphate; the sequence is GY. Residue H120 participates in substrate binding. Pyridoxal 5'-phosphate is bound by residues S167, 192-195, and 223-226; these read DDAH and TLSK. The residue at position 226 (K226) is an N6-(pyridoxal phosphate)lysine. A substrate-binding site is contributed by T337.

This sequence belongs to the class-II pyridoxal-phosphate-dependent aminotransferase family. BioF subfamily. Homodimer. Pyridoxal 5'-phosphate is required as a cofactor.

The enzyme catalyses 6-carboxyhexanoyl-[ACP] + L-alanine + H(+) = (8S)-8-amino-7-oxononanoate + holo-[ACP] + CO2. It participates in cofactor biosynthesis; biotin biosynthesis. Its function is as follows. Catalyzes the decarboxylative condensation of pimeloyl-[acyl-carrier protein] and L-alanine to produce 8-amino-7-oxononanoate (AON), [acyl-carrier protein], and carbon dioxide. This is Putative 8-amino-7-oxononanoate synthase (bioF) from Methanococcus vannielii (strain ATCC 35089 / DSM 1224 / JCM 13029 / OCM 148 / SB).